A 252-amino-acid polypeptide reads, in one-letter code: Imidazole glycerol phosphate synthase subunit HisF (252 aa).

Catalysis depends on residues Asp-11 and Asp-130.

It belongs to the HisA/HisF family. Heterodimer of HisH and HisF.

The protein resides in the cytoplasm. The enzyme catalyses 5-[(5-phospho-1-deoxy-D-ribulos-1-ylimino)methylamino]-1-(5-phospho-beta-D-ribosyl)imidazole-4-carboxamide + L-glutamine = D-erythro-1-(imidazol-4-yl)glycerol 3-phosphate + 5-amino-1-(5-phospho-beta-D-ribosyl)imidazole-4-carboxamide + L-glutamate + H(+). The protein operates within amino-acid biosynthesis; L-histidine biosynthesis; L-histidine from 5-phospho-alpha-D-ribose 1-diphosphate: step 5/9. Its function is as follows. IGPS catalyzes the conversion of PRFAR and glutamine to IGP, AICAR and glutamate. The HisF subunit catalyzes the cyclization activity that produces IGP and AICAR from PRFAR using the ammonia provided by the HisH subunit. The protein is Imidazole glycerol phosphate synthase subunit HisF of Streptococcus gordonii (strain Challis / ATCC 35105 / BCRC 15272 / CH1 / DL1 / V288).